Reading from the N-terminus, the 281-residue chain is Succinate dehydrogenase [ubiquinone] iron-sulfur subunit 1, mitochondrial (281 aa).

A mitochondrion-targeting transit peptide spans 1-25 (MAAAALLRRSPAARALLSPALSSRL). Residues 26 to 48 (VASKPHSSSPAPPPPPSKAGANT) are disordered. Residues 49 to 141 (KTFSIYRWDP…ASTISPLPHM (93 aa)) form the 2Fe-2S ferredoxin-type domain. 3 residues coordinate [2Fe-2S] cluster: C102, C107, and C122. Residues 184–214 (DRAKLDGMYECILCACCSTSCPSYWWNPEEY) enclose the 4Fe-4S ferredoxin-type domain. Residues C194, C197, and C200 each contribute to the [4Fe-4S] cluster site. C204 contacts [3Fe-4S] cluster. W209 contributes to the a ubiquinone binding site. 2 residues coordinate [3Fe-4S] cluster: C251 and C257. Residue C261 coordinates [4Fe-4S] cluster.

This sequence belongs to the succinate dehydrogenase/fumarate reductase iron-sulfur protein family. In terms of assembly, component of complex II composed of eight subunits in plants: four classical SDH subunits SDH1, SDH2, SDH3 and SDH4 (a flavoprotein (FP), an iron-sulfur protein (IP), and a cytochrome b composed of a large and a small subunit.), as well as four subunits unknown in mitochondria from bacteria and heterotrophic eukaryotes. [2Fe-2S] cluster serves as cofactor. The cofactor is [3Fe-4S] cluster. Requires [4Fe-4S] cluster as cofactor.

It is found in the mitochondrion inner membrane. The enzyme catalyses a quinone + succinate = fumarate + a quinol. It participates in carbohydrate metabolism; tricarboxylic acid cycle; fumarate from succinate (eukaryal route): step 1/1. In terms of biological role, iron-sulfur protein (IP) subunit of succinate dehydrogenase (SDH) that is involved in complex II of the mitochondrial electron transport chain and is responsible for transferring electrons from succinate to ubiquinone (coenzyme Q). In Oryza sativa subsp. japonica (Rice), this protein is Succinate dehydrogenase [ubiquinone] iron-sulfur subunit 1, mitochondrial.